Consider the following 234-residue polypeptide: Segregation and condensation protein A (234 aa).

It belongs to the ScpA family. In terms of assembly, component of a cohesin-like complex composed of ScpA, ScpB and the Smc homodimer, in which ScpA and ScpB bind to the head domain of Smc. The presence of the three proteins is required for the association of the complex with DNA.

The protein localises to the cytoplasm. In terms of biological role, participates in chromosomal partition during cell division. May act via the formation of a condensin-like complex containing Smc and ScpB that pull DNA away from mid-cell into both cell halves. The polypeptide is Segregation and condensation protein A (Streptococcus pyogenes serotype M5 (strain Manfredo)).